Reading from the N-terminus, the 504-residue chain is Cobyric acid synthase (504 aa).

A GATase cobBQ-type domain is found at 258–454 (EIEIAIIKLP…LHGIFENDEW (197 aa)). Cys-339 (nucleophile) is an active-site residue. His-446 is a catalytic residue.

Belongs to the CobB/CobQ family. CobQ subfamily.

It functions in the pathway cofactor biosynthesis; adenosylcobalamin biosynthesis. Catalyzes amidations at positions B, D, E, and G on adenosylcobyrinic A,C-diamide. NH(2) groups are provided by glutamine, and one molecule of ATP is hydrogenolyzed for each amidation. In Prochlorococcus marinus (strain NATL2A), this protein is Cobyric acid synthase.